The primary structure comprises 352 residues: Protein RecA (352 aa).

Residue 67 to 74 (GPESSGKT) participates in ATP binding. Residues 333–352 (DSTPDFAVDGNDAEETEQDF) form a disordered region. Residues 343–352 (NDAEETEQDF) are compositionally biased toward acidic residues.

The protein belongs to the RecA family.

The protein localises to the cytoplasm. Its function is as follows. Can catalyze the hydrolysis of ATP in the presence of single-stranded DNA, the ATP-dependent uptake of single-stranded DNA by duplex DNA, and the ATP-dependent hybridization of homologous single-stranded DNAs. It interacts with LexA causing its activation and leading to its autocatalytic cleavage. This is Protein RecA from Klebsiella pneumoniae (strain 342).